Reading from the N-terminus, the 89-residue chain is Acyl-CoA-binding protein (89 aa).

The ACB domain occupies 3–88; the sequence is LKEEFEEHAE…VKQLFEAAGS (86 aa). Residues 30–34, Lys-56, and Tyr-75 each bind an acyl-CoA; that span reads YGLYK.

This sequence belongs to the ACBP family.

Functionally, binds medium- and long-chain acyl-CoA esters with very high affinity and may function as an intracellular carrier of acyl-CoA esters. In Gossypium hirsutum (Upland cotton), this protein is Acyl-CoA-binding protein.